A 659-amino-acid polypeptide reads, in one-letter code: Acetyl-coenzyme A synthetase (659 aa).

CoA contacts are provided by residues 206 to 209 (RRGK) and Thr-324. Residues 400 to 402 (GEP), 424 to 429 (DTWWQT), Asp-516, Arg-531, and Arg-542 contribute to the ATP site. Val-553 and His-555 together coordinate Mg(2+). Arg-600 is a binding site for CoA.

The protein belongs to the ATP-dependent AMP-binding enzyme family. Mg(2+) is required as a cofactor.

It carries out the reaction acetate + ATP + CoA = acetyl-CoA + AMP + diphosphate. Catalyzes the conversion of acetate into acetyl-CoA (AcCoA), an essential intermediate at the junction of anabolic and catabolic pathways. AcsA undergoes a two-step reaction. In the first half reaction, AcsA combines acetate with ATP to form acetyl-adenylate (AcAMP) intermediate. In the second half reaction, it can then transfer the acetyl group from AcAMP to the sulfhydryl group of CoA, forming the product AcCoA. The chain is Acetyl-coenzyme A synthetase (acsA) from Methanothrix thermoacetophila (strain DSM 6194 / JCM 14653 / NBRC 101360 / PT) (Methanosaeta thermophila).